A 199-amino-acid chain; its full sequence is NAD(P)H dehydrogenase (quinone) (199 aa).

The Flavodoxin-like domain occupies 4–190 (VLVLYYSAYG…AGARYQGRVI (187 aa)). FMN-binding positions include 10–15 (SAYGHI) and 78–80 (TRF). An NAD(+)-binding site is contributed by Tyr-12. Substrate is bound at residue Trp-98. FMN contacts are provided by residues 113–119 (STATQHG) and His-134.

It belongs to the WrbA family. The cofactor is FMN.

It carries out the reaction a quinone + NADH + H(+) = a quinol + NAD(+). The enzyme catalyses a quinone + NADPH + H(+) = a quinol + NADP(+). In Bradyrhizobium sp. (strain BTAi1 / ATCC BAA-1182), this protein is NAD(P)H dehydrogenase (quinone).